A 149-amino-acid polypeptide reads, in one-letter code: Ribosome-binding factor A (149 aa).

A disordered region spans residues 124–149 (AKLREGAVPAGDADPYKTSSKSESEE).

It belongs to the RbfA family. Monomer. Binds 30S ribosomal subunits, but not 50S ribosomal subunits or 70S ribosomes.

Its subcellular location is the cytoplasm. Functionally, one of several proteins that assist in the late maturation steps of the functional core of the 30S ribosomal subunit. Associates with free 30S ribosomal subunits (but not with 30S subunits that are part of 70S ribosomes or polysomes). Required for efficient processing of 16S rRNA. May interact with the 5'-terminal helix region of 16S rRNA. This is Ribosome-binding factor A from Corynebacterium glutamicum (strain R).